We begin with the raw amino-acid sequence, 291 residues long: Homoserine kinase (291 aa).

79-89 is an ATP binding site; the sequence is PLARGLGSSSA.

It belongs to the GHMP kinase family. Homoserine kinase subfamily.

The protein resides in the cytoplasm. The enzyme catalyses L-homoserine + ATP = O-phospho-L-homoserine + ADP + H(+). Its pathway is amino-acid biosynthesis; L-threonine biosynthesis; L-threonine from L-aspartate: step 4/5. Its function is as follows. Catalyzes the ATP-dependent phosphorylation of L-homoserine to L-homoserine phosphate. The chain is Homoserine kinase from Leuconostoc citreum (strain KM20).